Here is a 241-residue protein sequence, read N- to C-terminus: Uridylate kinase (241 aa).

15–18 (KLSG) serves as a coordination point for ATP. Gly-57 provides a ligand contact to UMP. Positions 58 and 62 each coordinate ATP. UMP contacts are provided by residues Asp-77 and 139–146 (IGHTLFTT). Thr-166, Asn-167, Phe-172, and Asp-175 together coordinate ATP.

This sequence belongs to the UMP kinase family. As to quaternary structure, homohexamer.

Its subcellular location is the cytoplasm. The catalysed reaction is UMP + ATP = UDP + ADP. Its pathway is pyrimidine metabolism; CTP biosynthesis via de novo pathway; UDP from UMP (UMPK route): step 1/1. Inhibited by UTP. Its function is as follows. Catalyzes the reversible phosphorylation of UMP to UDP. The polypeptide is Uridylate kinase (Wigglesworthia glossinidia brevipalpis).